The chain runs to 71 residues: Large ribosomal subunit protein bL31 (71 aa).

Cysteine 16, cysteine 18, cysteine 37, and cysteine 40 together coordinate Zn(2+).

The protein belongs to the bacterial ribosomal protein bL31 family. Type A subfamily. In terms of assembly, part of the 50S ribosomal subunit. Requires Zn(2+) as cofactor.

Its function is as follows. Binds the 23S rRNA. This is Large ribosomal subunit protein bL31 from Actinobacillus succinogenes (strain ATCC 55618 / DSM 22257 / CCUG 43843 / 130Z).